Consider the following 739-residue polypeptide: Platelet endothelial cell adhesion molecule (739 aa).

Positions 1-27 (MQLRWTQRGMMWLGALLTLLLCSSLKG) are cleaved as a signal peptide. Residues 28 to 599 (QENSFTINSI…TVRVYLPLEK (572 aa)) lie on the Extracellular side of the membrane. Ig-like C2-type domains follow at residues 35 to 120 (NSIH…EKTT), 145 to 213 (GGVV…IFSG), and 236 to 315 (PKFH…SKVS). 3 N-linked (GlcNAc...) asparagine glycosylation sites follow: Asn-52, Asn-84, and Asn-151. A disulfide bond links Cys-57 and Cys-109. 2 disulfide bridges follow: Cys-152-Cys-206 and Cys-256-Cys-304. N-linked (GlcNAc...) asparagine glycosylation is found at Asn-301, Asn-320, Asn-356, Asn-371, Asn-435, Asn-446, Asn-453, Asn-550, and Asn-578. Ig-like C2-type domains are found at residues 328-403 (PKLE…VQIT), 424-493 (GQTI…EVLR), and 499-590 (PVDE…NTLT). Disulfide bonds link Cys-347-Cys-386, Cys-431-Cys-476, and Cys-522-Cys-571. Residues 600 to 618 (GLIAVVVIGVIIVTLVLGA) form a helical membrane-spanning segment. At 619-739 (KCYFLKKAKA…SRTEGSLDGS (121 aa)) the chain is on the cytoplasmic side. Residue Cys-620 is the site of S-palmitoyl cysteine attachment. Short sequence motifs (ITIM motif) lie at residues 687 to 692 (VEYTEV) and 712 to 717 (TVYSEI). Residues Tyr-689 and Tyr-714 each carry the phosphotyrosine; by FER modification. Residues 708-730 (TETETVYSEIRKADPDFVENRYS) are membrane-bound segment which detaches upon phosphorylation. Residues 722–739 (PDFVENRYSRTEGSLDGS) are may play a role in cytoprotective signaling. Phosphoserine occurs at positions 730 and 735.

In terms of assembly, trans-homodimer (via Ig-like C2-type 1 and Ig-like C2-type 2 domains); trans-homodimerization is required for cell-cell interaction. Forms a complex with BDKRB2 and GNAQ. Interacts with BDKRB2 and GNAQ. Interacts with PTPN11; Tyr-714 is critical for PTPN11 recruitment. Interacts with FER. Interacts with CD177; the interaction is Ca(2+)-dependent; the interaction is direct. Post-translationally, phosphorylated on Ser and Tyr residues by src kinases after cellular activation. Upon activation, phosphorylated on Ser-730 which probably initiates the dissociation of the membrane-interaction segment (residues 708-730) from the cell membrane allowing the sequential phosphorylation of Tyr-714 and Tyr-689. Constitutively phosphorylated on Ser-735 in resting platelets. Phosphorylated on tyrosine residues by FER and FES in response to FCER1 activation. In endothelial cells Fyn mediates mechanical-force (stretch or pull) induced tyrosine phosphorylation. Palmitoylation by ZDHHC21 is necessary for cell surface expression in endothelial cells and enrichment in membrane rafts.

Its subcellular location is the cell membrane. It localises to the membrane raft. The protein resides in the cell junction. Cell adhesion molecule which is required for leukocyte transendothelial migration (TEM) under most inflammatory conditions. Tyr-689 plays a critical role in TEM and is required for efficient trafficking of PECAM1 to and from the lateral border recycling compartment (LBRC) and is also essential for the LBRC membrane to be targeted around migrating leukocytes. Trans-homophilic interaction may play a role in endothelial cell-cell adhesion via cell junctions. Heterophilic interaction with CD177 plays a role in transendothelial migration of neutrophils. Homophilic ligation of PECAM1 prevents macrophage-mediated phagocytosis of neighboring viable leukocytes by transmitting a detachment signal. Promotes macrophage-mediated phagocytosis of apoptotic leukocytes by tethering them to the phagocytic cells; PECAM1-mediated detachment signal appears to be disabled in apoptotic leukocytes. Modulates bradykinin receptor BDKRB2 activation. Regulates bradykinin- and hyperosmotic shock-induced ERK1/2 activation in endothelial cells. Induces susceptibility to atherosclerosis. The polypeptide is Platelet endothelial cell adhesion molecule (PECAM1) (Bos taurus (Bovine)).